The primary structure comprises 280 residues: Inhibitor of growth protein 2 (280 aa).

Residues 48 to 120 (VLRELDNKYQ…VENRARQMEL (73 aa)) adopt a coiled-coil conformation. The disordered stretch occupies residues 122-204 (SQCFQDPAES…KQEREASPVE (83 aa)). A compositionally biased stretch (basic and acidic residues) spans 130-140 (ESERASDKAKM). A compositionally biased stretch (basic residues) spans 181–193 (KKSKSAKKKKRSK). A Glycyl lysine isopeptide (Lys-Gly) (interchain with G-Cter in SUMO1) cross-link involves residue Lys195. The PHD-type zinc finger occupies 212–261 (PTYCLCNQVSYGEMIGCDNEQCPIEWFHFSCVSLTYKPKGKWYCPKCRGD). Residues Cys215, Cys217, Cys228, Cys233, His239, Cys242, Cys255, and Cys258 each contribute to the Zn(2+) site. Over residues 258–274 (CRGDNEKTMDKSTEKTK) the composition is skewed to basic and acidic residues. The disordered stretch occupies residues 258–280 (CRGDNEKTMDKSTEKTKKDRRSR). Positions 264 to 280 (KTMDKSTEKTKKDRRSR) are PBR.

The protein belongs to the ING family. Interacts with H3K4me3 and to a lesser extent with H3K4me2. Component of a mSin3A-like complex at least consisting of SIN3A, HDAC1, HDAC2, RBBP4/RbAp48, RBBP7/RbAp46, SAP30 and ING2. In terms of processing, sumoylation enhances its association with SIN3A and is required for binding to some target gene promoters, this is the case for TMEM71. In terms of tissue distribution, widely expressed. Higher expressed in colon-cancer tumor than in normal colon tissues.

It is found in the nucleus. Its function is as follows. Seems to be involved in p53/TP53 activation and p53/TP53-dependent apoptotic pathways, probably by enhancing acetylation of p53/TP53. Component of a mSin3A-like corepressor complex, which is probably involved in deacetylation of nucleosomal histones. ING2 activity seems to be modulated by binding to phosphoinositides (PtdInsPs). This is Inhibitor of growth protein 2 (ING2) from Homo sapiens (Human).